Reading from the N-terminus, the 491-residue chain is Subtilase-type proteinase RRT12 (491 aa).

A signal peptide spans 1–17 (MKPQCILISLLVNLAYA). 4 N-linked (GlcNAc...) asparagine glycosylation sites follow: Asn38, Asn64, Asn106, and Asn121. The region spanning 142-442 (PFDVGDKDRY…FPRLNIEAIA (301 aa)) is the Peptidase S8 domain. Catalysis depends on charge relay system residues Asp174 and His205. N-linked (GlcNAc...) asparagine glycosylation is found at Asn268 and Asn356. Ser365 (charge relay system) is an active-site residue. The N-linked (GlcNAc...) asparagine glycan is linked to Asn449.

Belongs to the peptidase S8 family. N-glycosylated.

It localises to the spore wall. Its function is as follows. Subtilisin-related protease involved in the formation of a protective dityrosine layer required for spore wall assembly. Identified in a screen for mutants with increased levels of rDNA transcription. This Saccharomyces cerevisiae (strain ATCC 204508 / S288c) (Baker's yeast) protein is Subtilase-type proteinase RRT12 (RRT12).